A 245-amino-acid chain; its full sequence is CMRF35-like molecule 3 (245 aa).

The N-terminal stretch at 1-18 (MWQFPALLFLFLPGCCTA) is a signal peptide. The Ig-like V-type domain maps to 19–124 (QDPVTGPEEV…TDPMFKVNVN (106 aa)). Residues 19 to 189 (QDPVTGPEEV…FIWSLLSSIS (171 aa)) are Extracellular-facing. A disulfide bridge links Cys40 with Cys108. Important for maintaining surface expression and for interaction with FCER1G stretches follow at residues 177–182 (NSLFIW) and 189–198 (SFLLMVFVVV). The helical transmembrane segment at 190–210 (FLLMVFVVVPLLLSMLSAVLW) threads the bilayer. Over 211-245 (VNRPQRHYGGGEIGLVETHRSDALDGEKHFPGDEK) the chain is Cytoplasmic.

This sequence belongs to the CD300 family. Interacts with FCER1G; the interaction may be indirect. Interacts with TLR9. In terms of tissue distribution, highly expressed in bone marrow-derived mast cells and macrophages, peripheral blood monocytes and CD11c+ cells, with weaker expression detected in CD11b cells in bone marrow and peripheral blood. Not detected in B220+ cells in bone marrow or spleen, in Thy-1.2+ or CD3+ cells in peripheral blood, spleen or thymus, or in NK1.1+ cells in spleen (at protein level). Widely expressed in various tissues including heart, liver, spleen, lung, kidney, brain, bone marrow, thymus, axillary lymph node and mesenteric lymph node. Highly expressed in macrophage cell lines J774.1 and RAW 264.7 and in mast cell line MC/9. Weak expression detected in B-lineage cell lines WEHI-231 and A20 and in dendritic cell line DC2.4. Not detected in other myeloid cell lines or T-lineage cell lines.

The protein localises to the cell membrane. It localises to the early endosome. Its subcellular location is the lysosome. Acts as an activating receptor inducing cytokine production in mast cells. Can act as a positive regulator of TLR9 signaling in macrophages, leading to enhanced production of pro-inflammatory cytokines. In Mus musculus (Mouse), this protein is CMRF35-like molecule 3.